A 135-amino-acid polypeptide reads, in one-letter code: Mediator of RNA polymerase II transcription subunit 10 (135 aa).

This sequence belongs to the Mediator complex subunit 10 family. In terms of assembly, component of the Mediator complex, which is composed of MED1, MED4, MED6, MED7, MED8, MED9, MED10, MED11, MED12, MED13, MED13L, MED14, MED15, MED16, MED17, MED18, MED19, MED20, MED21, MED22, MED23, MED24, MED25, MED26, MED27, MED29, MED30, MED31, CCNC, CDK8 and CDC2L6/CDK11. The MED12, MED13, CCNC and CDK8 subunits form a distinct module termed the CDK8 module. Mediator containing the CDK8 module is less active than Mediator lacking this module in supporting transcriptional activation. Individual preparations of the Mediator complex lacking one or more distinct subunits have been variously termed ARC, CRSP, DRIP, PC2, SMCC and TRAP.

It localises to the nucleus. In terms of biological role, component of the Mediator complex, a coactivator involved in the regulated transcription of nearly all RNA polymerase II-dependent genes. Mediator functions as a bridge to convey information from gene-specific regulatory proteins to the basal RNA polymerase II transcription machinery. Mediator is recruited to promoters by direct interactions with regulatory proteins and serves as a scaffold for the assembly of a functional preinitiation complex with RNA polymerase II and the general transcription factors. This chain is Mediator of RNA polymerase II transcription subunit 10 (Med10), found in Mus musculus (Mouse).